Consider the following 1021-residue polypeptide: Sodium/potassium-transporting ATPase subunit alpha-1 (1021 aa).

The propeptide occupies 1-5; it reads MGKGV. Residues 1 to 11 show a composition bias toward basic and acidic residues; sequence MGKGVGRDKYE. The tract at residues 1–36 is disordered; that stretch reads MGKGVGRDKYEPAAVSEHGDKKKAKKERDMDELKKE. Residues 6–85 lie on the Cytoplasmic side of the membrane; that stretch reads GRDKYEPAAV…NALTPPPTTP (80 aa). The residue at position 9 (Lys-9) is an N6-acetyllysine. Position 10 is a phosphotyrosine (Tyr-10). Phosphoserine; by PKC is present on Ser-16. The residue at position 21 (Lys-21) is an N6-acetyllysine. Over residues 26–36 the composition is skewed to basic and acidic residues; it reads KERDMDELKKE. Ser-38 and Ser-45 each carry phosphoserine. The interval 80–82 is phosphoinositide-3 kinase binding; sequence PPP. The helical transmembrane segment at 86–106 threads the bilayer; sequence EWVKFCRQLFGGFSMLLWIGA. Topologically, residues 107–129 are extracellular; it reads VLCFLAYGIQAATEEEPQNDNLY. Residues 130–150 traverse the membrane as a helical segment; it reads LGVVLSAVVIITGCFSYYQEA. Topologically, residues 151–286 are cytoplasmic; it reads KSSKIMESFK…GGQTPIAAEI (136 aa). Ser-226 carries the post-translational modification Phosphoserine. The residue at position 258 (Tyr-258) is a Phosphotyrosine. Residues 287-306 form a helical membrane-spanning segment; sequence EHFIHIITGVAVFLGVSFFI. Over 307-318 the chain is Extracellular; the sequence is LSLILEYTWLEA. The chain crosses the membrane as a helical span at residues 319–336; that stretch reads VIFLIGIIVANVPEGLLA. Residues 337-770 lie on the Cytoplasmic side of the membrane; sequence TVTVCLTLTA…EEGRLIFDNL (434 aa). The active-site 4-aspartylphosphate intermediate is Asp-374. Ser-450 and Ser-482 each carry phosphoserine. Residue Lys-485 participates in ATP binding. At Tyr-540 the chain carries Phosphotyrosine. The interval 594-715 is mediates interaction with SCN7A; sequence RAAVPDAVGK…QGAIVAVTGD (122 aa). Residue Ser-666 is modified to Phosphoserine. Mg(2+) contacts are provided by Asp-715 and Asp-719. A helical membrane pass occupies residues 771 to 790; the sequence is KKSIAYTLTSNIPEITPFLI. Over 791-800 the chain is Extracellular; the sequence is FIIANIPLPL. A helical transmembrane segment spans residues 801–821; that stretch reads GTVTILCIDLGTDMVPAISLA. The Cytoplasmic segment spans residues 822–841; sequence YEQAESDIMKRQPRNPQTDK. Residues 842–864 form a helical membrane-spanning segment; the sequence is LVNERLISMAYGQIGMIQALGGF. At 865–916 the chain is on the extracellular side; that stretch reads FTYFVIMAENGFLPNHLLGIRVTWDDRWINDVEDSYGQQWTYEQRKIVEFTC. The chain crosses the membrane as a helical span at residues 917-936; it reads HTAFFVSIVVVQWADLVICK. At 937–949 the chain is on the cytoplasmic side; that stretch reads TRRNSVFQQGMKN. At Ser-941 the chain carries Phosphoserine; by PKA. A helical membrane pass occupies residues 950 to 968; that stretch reads KILIFGLFEETALAAFLSY. Residues 969–983 are Extracellular-facing; that stretch reads CPGMGVALRMYPLKP. The chain crosses the membrane as a helical span at residues 984–1004; sequence TWWFCAFPYSLLIFVYDEVRK. Topologically, residues 1005 to 1021 are cytoplasmic; sequence LIIRRRPGGWVEKETYY.

It belongs to the cation transport ATPase (P-type) (TC 3.A.3) family. Type IIC subfamily. As to quaternary structure, the sodium/potassium-transporting ATPase is composed of a catalytic alpha subunit, an auxiliary non-catalytic beta subunit and an additional regulatory subunit. Interacts with regulatory subunit FXYD1. Interacts with regulatory subunit FXYD3. Interacts with SIK1. Interacts with SLC35G1 and STIM1. Interacts with CLN3; this interaction regulates the sodium/potassium-transporting ATPase complex localization at the plasma membrane. Interacts with SCN7A; activates ATP1A1 P-type sodium:potassium-exchanging transporter activity which indirectly signals to nearby neurons to regulate sodium homeostasis. In terms of processing, phosphorylation on Tyr-10 modulates pumping activity. Phosphorylation of Ser-941 by PKA modulates the response of ATP1A1 to PKC. Dephosphorylation by protein phosphatase 2A (PP2A) following increases in intracellular sodium, leading to increase catalytic activity.

It localises to the cell membrane. It is found in the basolateral cell membrane. The protein localises to the sarcolemma. Its subcellular location is the cell projection. The protein resides in the axon. It localises to the melanosome. The enzyme catalyses K(+)(out) + Na(+)(in) + ATP + H2O = K(+)(in) + Na(+)(out) + ADP + phosphate + H(+). Specifically inhibited by cardiac glycosides such as digoxin or ouabain. Functionally, this is the catalytic component of the active enzyme, which catalyzes the hydrolysis of ATP coupled with the exchange of sodium and potassium ions across the plasma membrane. This action creates the electrochemical gradient of sodium and potassium ions, providing the energy for active transport of various nutrients. Could also be part of an osmosensory signaling pathway that senses body-fluid sodium levels and controls salt intake behavior as well as voluntary water intake to regulate sodium homeostasis. This chain is Sodium/potassium-transporting ATPase subunit alpha-1 (ATP1A1), found in Ovis aries (Sheep).